The chain runs to 358 residues: sn-glycerol-3-phosphate import ATP-binding protein UgpC (358 aa).

Residues 4-235 (VELKQVRKTY…PATLFVASFI (232 aa)) form the ABC transporter domain. ATP is bound at residue 37 to 44 (GPSGCGKS).

The protein belongs to the ABC transporter superfamily. sn-glycerol-3-phosphate importer (TC 3.A.1.1.3) family. In terms of assembly, the complex is composed of two ATP-binding proteins (UgpC), two transmembrane proteins (UgpA and UgpE) and a solute-binding protein (UgpB).

It localises to the cell inner membrane. The catalysed reaction is sn-glycerol 3-phosphate(out) + ATP + H2O = sn-glycerol 3-phosphate(in) + ADP + phosphate + H(+). In terms of biological role, part of the ABC transporter complex UgpBAEC involved in sn-glycerol-3-phosphate (G3P) import. Responsible for energy coupling to the transport system. This chain is sn-glycerol-3-phosphate import ATP-binding protein UgpC, found in Roseobacter denitrificans (strain ATCC 33942 / OCh 114) (Erythrobacter sp. (strain OCh 114)).